Consider the following 21-residue polypeptide: Magainin-B1 (21 aa).

Expressed by the skin glands.

It is found in the secreted. Functionally, has no antimicrobial activity against tested bacteria. The protein is Magainin-B1 of Xenopus borealis (Kenyan clawed frog).